Consider the following 463-residue polypeptide: Hexokinase-7 (463 aa).

In terms of domain architecture, Hexokinase spans 7-456; that stretch reads AAAEQVVAAL…SGLGAALIAA (450 aa). The segment at 62–199 is hexokinase small subdomain; the sequence is NGTEEGLFYA…GLDMRVSALI (138 aa). Residues glycine 76, threonine 77, and asparagine 78 each contribute to the ADP site. Residues threonine 165, lysine 166, asparagine 200, and aspartate 201 each contribute to the D-glucose site. The tract at residues 200–445 is hexokinase large subdomain; it reads NDTVGTLAAG…KSVAVKLAND (246 aa). Residue threonine 224 participates in ADP binding. Asparagine 227, glutamate 255, and glutamate 286 together coordinate D-glucose. Glycine 410 contacts ADP.

Belongs to the hexokinase family. Expressed in roots, leaves, flowers, immature seeds and seed coat.

Its subcellular location is the cytoplasm. The enzyme catalyses a D-hexose + ATP = a D-hexose 6-phosphate + ADP + H(+). The catalysed reaction is D-fructose + ATP = D-fructose 6-phosphate + ADP + H(+). It carries out the reaction D-glucose + ATP = D-glucose 6-phosphate + ADP + H(+). Its pathway is carbohydrate metabolism; hexose metabolism. The protein operates within carbohydrate degradation; glycolysis; D-glyceraldehyde 3-phosphate and glycerone phosphate from D-glucose: step 1/4. Functionally, fructose and glucose phosphorylating enzyme. Functions in sugar signaling via a glycolysis-dependent manner under aerobic conditions, but its signaling role is suppressed when oxygen is deficient. The chain is Hexokinase-7 (HXK7) from Oryza sativa subsp. japonica (Rice).